Reading from the N-terminus, the 290-residue chain is Hsp70 nucleotide exchange factor FES1 (290 aa).

Phosphoserine is present on Ser12. 6 ARM repeats span residues 13–57, 76–116, 120–161, 164–205, 211–251, and 253–290; these read QGDK…NPEV, LDNA…TAVQ, DSQN…NLIR, KDIS…AYLS, ENII…HLIS, and GIKF…KYVL.

The protein belongs to the FES1 family. Interacts with the Hsp70 chaperones SSA1 and SSB1.

The protein resides in the cytoplasm. Functionally, involved in protein translation, propagation of [PSI+] prions, and polyamine tolerance. Functions as a nucleotide exchange factor (NEF), which accelerates the release of ADP, for the cytosolic Hsp70 chaperone SSA1 and the ribosome-associated Hsp70 chaperone SSB1. Required for fully efficient Hsp70-mediated folding of proteins. This Saccharomyces cerevisiae (strain ATCC 204508 / S288c) (Baker's yeast) protein is Hsp70 nucleotide exchange factor FES1 (FES1).